Consider the following 2552-residue polypeptide: Protein TIC 214 (2552 aa).

Helical transmembrane passes span 15–35 (LIFG…SYLF), 54–74 (LSYG…YLPF), 78–98 (LSNF…QFFW), 119–136 (TLAF…YTFF), 154–174 (FKIL…LICI), and 243–263 (ILAT…PIPF). The tract at residues 304 to 325 (EEQKKDEKSADEEKKRAVEEEN) is disordered. Basic and acidic residues predominate over residues 305–322 (EQKKDEKSADEEKKRAVE). Transmembrane regions (helical) follow at residues 362–382 (TLYT…AFLF), 423–443 (PFLV…SVYI), and 452–472 (FLFN…HFFF). A disordered region spans residues 2045–2077 (MKAEEQKKIDEEYEEKKEKRKKEQEEQGKAFDE). Residues 2416–2511 (RRRRQLRIVN…IKKKLMRLRF (96 aa)) are a coiled coil.

This sequence belongs to the TIC214 family. In terms of assembly, part of the Tic complex.

It is found in the plastid. Its subcellular location is the chloroplast inner membrane. Involved in protein precursor import into chloroplasts. May be part of an intermediate translocation complex acting as a protein-conducting channel at the inner envelope. The chain is Protein TIC 214 from Pelargonium hortorum (Common geranium).